We begin with the raw amino-acid sequence, 125 residues long: Large ribosomal subunit protein bL20 (125 aa).

Belongs to the bacterial ribosomal protein bL20 family.

Binds directly to 23S ribosomal RNA and is necessary for the in vitro assembly process of the 50S ribosomal subunit. It is not involved in the protein synthesizing functions of that subunit. This Rhodospirillum rubrum (strain ATCC 11170 / ATH 1.1.1 / DSM 467 / LMG 4362 / NCIMB 8255 / S1) protein is Large ribosomal subunit protein bL20.